We begin with the raw amino-acid sequence, 333 residues long: Type II secretion system protein K (333 aa).

The propeptide at 1–7 (MRRGQNG) is leader sequence. A helical membrane pass occupies residues 8 to 29 (VALITVLLVVAVVTIVCAGLII). Over 30-333 (RQQLAIRSSA…GGDDWKKDER (304 aa)) the chain is Periplasmic. The tract at residues 313–333 (MGQGGLPIPSTGGDDWKKDER) is disordered.

This sequence belongs to the GSP K family. Type II secretion is composed of four main components: the outer membrane complex, the inner membrane complex, the cytoplasmic secretion ATPase and the periplasm-spanning pseudopilus. Interacts with the tip of the type II pseudopilus subunits XcpV, XcpU and XcpW. Interacts with core component XcpT. In terms of processing, cleaved by prepilin peptidase.

The protein resides in the cell inner membrane. In terms of biological role, component of the type II secretion system required for the energy-dependent secretion of extracellular factors such as proteases and toxins from the periplasm. Plays a role in pseudopilus assembly and seems to control its length. Interacts with the pseudopilus tip complex that is critical for the recognition and binding of secretion substrates. Type II pseudopilus confers increased bacterial adhesive capabilities. The polypeptide is Type II secretion system protein K (xcpX) (Pseudomonas aeruginosa (strain ATCC 15692 / DSM 22644 / CIP 104116 / JCM 14847 / LMG 12228 / 1C / PRS 101 / PAO1)).